The sequence spans 688 residues: Pescadillo homolog (688 aa).

The region spanning 351–470 (EVASLFASFT…KLLRHDLYAP (120 aa)) is the BRCT domain. 2 disordered regions span residues 411 to 442 (RPPLPESALPPLPQNPGEGAEKAPRVRPGTRM) and 496 to 688 (AEQE…TKGR). Residues 412-424 (PPLPESALPPLPQ) show a composition bias toward pro residues. Residues 496–536 (AEQESDGEAERQAEEENEEEESEVEGLSMDKEMVETENSEA) are a coiled coil. Composition is skewed to acidic residues over residues 510 to 519 (EENEEEESEV), 530 to 544 (ETENSEAGESDEESV), 554 to 565 (GSDDEEEESEED), and 576 to 589 (EAADVQSESEDDEE). A compositionally biased stretch (basic residues) spans 619–634 (KKSKKQKPLAKKHAAQ). Residues 627 to 686 (LAKKHAAQKKKEQEELERQKMMMSRKKRKLLDKMLYSNKKKDEEAEKLRRKRRKIEQGTK) adopt a coiled-coil conformation. Positions 635 to 646 (KKKEQEELERQK) are enriched in basic and acidic residues.

Belongs to the pescadillo family. Component of the NOP7 complex, composed of ERB1, NOP7 and YTM1. The complex is held together by ERB1, which interacts with NOP7 via its N-terminal domain and with YTM1 via a high-affinity interaction between the seven-bladed beta-propeller domains of the 2 proteins. The NOP7 complex associates with the 66S pre-ribosome.

The protein resides in the nucleus. It is found in the nucleolus. The protein localises to the nucleoplasm. Its function is as follows. Component of the NOP7 complex, which is required for maturation of the 25S and 5.8S ribosomal RNAs and formation of the 60S ribosome. This Coccidioides immitis (strain RS) (Valley fever fungus) protein is Pescadillo homolog.